The primary structure comprises 94 residues: Phosphoribosyl-ATP pyrophosphatase (94 aa).

The protein belongs to the PRA-PH family.

The protein localises to the cytoplasm. It catalyses the reaction 1-(5-phospho-beta-D-ribosyl)-ATP + H2O = 1-(5-phospho-beta-D-ribosyl)-5'-AMP + diphosphate + H(+). The protein operates within amino-acid biosynthesis; L-histidine biosynthesis; L-histidine from 5-phospho-alpha-D-ribose 1-diphosphate: step 2/9. In Pyrobaculum aerophilum (strain ATCC 51768 / DSM 7523 / JCM 9630 / CIP 104966 / NBRC 100827 / IM2), this protein is Phosphoribosyl-ATP pyrophosphatase (hisE).